A 259-amino-acid chain; its full sequence is GTP cyclohydrolase FolE2 (259 aa).

The protein belongs to the GTP cyclohydrolase IV family.

The catalysed reaction is GTP + H2O = 7,8-dihydroneopterin 3'-triphosphate + formate + H(+). Its pathway is cofactor biosynthesis; 7,8-dihydroneopterin triphosphate biosynthesis; 7,8-dihydroneopterin triphosphate from GTP: step 1/1. In terms of biological role, converts GTP to 7,8-dihydroneopterin triphosphate. The polypeptide is GTP cyclohydrolase FolE2 (Halorhodospira halophila (strain DSM 244 / SL1) (Ectothiorhodospira halophila (strain DSM 244 / SL1))).